Consider the following 721-residue polypeptide: Phosphomethylpyrimidine synthase (721 aa).

Residues Asn256, Met285, Tyr314, His350, 370–372 (SRG), 411–414 (DGMR), and Glu450 contribute to the substrate site. Position 454 (His454) interacts with Zn(2+). Tyr477 serves as a coordination point for substrate. His518 serves as a coordination point for Zn(2+). [4Fe-4S] cluster-binding residues include Cys598, Cys601, and Cys606.

It belongs to the ThiC family. In terms of assembly, homodimer. [4Fe-4S] cluster is required as a cofactor.

It catalyses the reaction 5-amino-1-(5-phospho-beta-D-ribosyl)imidazole + S-adenosyl-L-methionine = 4-amino-2-methyl-5-(phosphooxymethyl)pyrimidine + CO + 5'-deoxyadenosine + formate + L-methionine + 3 H(+). Its pathway is cofactor biosynthesis; thiamine diphosphate biosynthesis. In terms of biological role, catalyzes the synthesis of the hydroxymethylpyrimidine phosphate (HMP-P) moiety of thiamine from aminoimidazole ribotide (AIR) in a radical S-adenosyl-L-methionine (SAM)-dependent reaction. The chain is Phosphomethylpyrimidine synthase from Shewanella oneidensis (strain ATCC 700550 / JCM 31522 / CIP 106686 / LMG 19005 / NCIMB 14063 / MR-1).